We begin with the raw amino-acid sequence, 168 residues long: Cytolysin secretion protein (168 aa).

The chain is Cytolysin secretion protein (vvhB) from Vibrio vulnificus (strain CMCP6).